The chain runs to 362 residues: Heat-inducible transcription repressor HrcA (362 aa).

Belongs to the HrcA family.

Its function is as follows. Negative regulator of class I heat shock genes (grpE-dnaK-dnaJ and groELS operons). Prevents heat-shock induction of these operons. The sequence is that of Heat-inducible transcription repressor HrcA from Nitrobacter hamburgensis (strain DSM 10229 / NCIMB 13809 / X14).